The chain runs to 623 residues: Transketolase (623 aa).

At methionine 1 the chain carries N-acetylmethionine. 2 positions are modified to N6-acetyllysine: lysine 6 and lysine 11. Histidine 37 lines the substrate pocket. Thiamine diphosphate-binding residues include serine 40 and histidine 77. Residue serine 104 is modified to Phosphoserine. Thiamine diphosphate is bound at residue 123–125 (GSL). Lysine 144 is modified (N6-acetyllysine). Aspartate 155 is a Mg(2+) binding site. Thiamine diphosphate-binding residues include glycine 156 and asparagine 185. Residues asparagine 185 and leucine 187 each coordinate Mg(2+). Residues lysine 204, lysine 232, and lysine 241 each carry the N6-acetyllysine modification. Thiamine diphosphate-binding residues include lysine 244 and histidine 258. Histidine 258 contacts substrate. Lysine 260 carries the post-translational modification N6-acetyllysine. The residue at position 275 (tyrosine 275) is a Phosphotyrosine. Threonine 287 is subject to Phosphothreonine. Residue serine 295 is modified to Phosphoserine. Residues arginine 318 and serine 345 each coordinate substrate. At serine 345 the chain carries Phosphoserine. A Glycyl lysine isopeptide (Lys-Gly) (interchain with G-Cter in SUMO2) cross-link involves residue lysine 352. Glutamate 366 serves as the catalytic Proton donor. Phenylalanine 392 is a binding site for thiamine diphosphate. Residues histidine 416 and aspartate 424 each contribute to the substrate site. Residue glutamine 428 coordinates thiamine diphosphate. Residue arginine 474 participates in substrate binding. N6-acetyllysine occurs at positions 538 and 603.

Belongs to the transketolase family. As to quaternary structure, homodimer. Mg(2+) serves as cofactor. It depends on Ca(2+) as a cofactor. The cofactor is Mn(2+). Co(2+) is required as a cofactor. Requires thiamine diphosphate as cofactor.

It carries out the reaction D-sedoheptulose 7-phosphate + D-glyceraldehyde 3-phosphate = aldehydo-D-ribose 5-phosphate + D-xylulose 5-phosphate. In terms of biological role, catalyzes the transfer of a two-carbon ketol group from a ketose donor to an aldose acceptor, via a covalent intermediate with the cofactor thiamine pyrophosphate. This Mus musculus (Mouse) protein is Transketolase (Tkt).